We begin with the raw amino-acid sequence, 436 residues long: Trigger factor (436 aa).

Residues 163–248 (GDRVVLDFAG…VKEVAEGVLP (86 aa)) form the PPIase FKBP-type domain.

It belongs to the FKBP-type PPIase family. Tig subfamily.

Its subcellular location is the cytoplasm. It carries out the reaction [protein]-peptidylproline (omega=180) = [protein]-peptidylproline (omega=0). Its function is as follows. Involved in protein export. Acts as a chaperone by maintaining the newly synthesized protein in an open conformation. Functions as a peptidyl-prolyl cis-trans isomerase. This Bordetella pertussis (strain Tohama I / ATCC BAA-589 / NCTC 13251) protein is Trigger factor.